Consider the following 153-residue polypeptide: Bacteriohemerythrin (153 aa).

Histidine 21, histidine 57, glutamate 61, histidine 76, histidine 80, histidine 115, and aspartate 120 together coordinate Fe cation.

The protein belongs to the hemerythrin family. Monomer.

Functionally, oxygen-binding protein. May be involved in a storage mechanism or for delivery to oxygen-requiring enzymes. The oxygen-binding site contains two iron atoms. The sequence is that of Bacteriohemerythrin from Stenotrophomonas maltophilia (strain R551-3).